Reading from the N-terminus, the 272-residue chain is Expansin-B16 (272 aa).

Residues 1–25 (MAAFSSSSSAPMLIRSVLFVSLLSA) form the signal peptide. The region spanning 63-173 (GGACGYGTLV…RRTACKYGGK (111 aa)) is the Expansin-like EG45 domain. Cystine bridges form between C66/C95, C98/C168, and C103/C109. One can recognise an Expansin-like CBD domain in the interval 186–267 (FWLSLLVEFE…NWTPKATYTS (82 aa)).

This sequence belongs to the expansin family. Expansin B subfamily.

Its subcellular location is the secreted. The protein resides in the cell wall. The protein localises to the membrane. Its function is as follows. May cause loosening and extension of plant cell walls by disrupting non-covalent bonding between cellulose microfibrils and matrix glucans. No enzymatic activity has been found. May be required for rapid internodal elongation in deepwater rice during submergence. In Oryza sativa subsp. japonica (Rice), this protein is Expansin-B16 (EXPB16).